A 517-amino-acid chain; its full sequence is Fluconazole resistance protein 1 (517 aa).

Residues 26 to 52 constitute a DNA-binding region (zn(2)-C6 fungal-type); it reads CDSCRIKKTKCDGKKPCNRCTLDNKIC. Disordered regions lie at residues 106 to 137, 250 to 270, 284 to 307, and 378 to 403; these read KSVD…QNST, SAQF…QQQQ, SDIE…PPTS, and GSIQ…VSSF. Residues 113–124 are compositionally biased toward low complexity; that stretch reads SSPASSTPNSSS. Over residues 250–260 the composition is skewed to polar residues; it reads SAQFSKGTFSP. The segment covering 261–270 has biased composition (low complexity); that stretch reads QQQQLQQQQQ. A compositionally biased stretch (polar residues) spans 298–307; sequence NSGSVSPPTS. Residues 388-398 are compositionally biased toward basic residues; it reads GSVHKPVRNHS.

It is found in the nucleus. In terms of biological role, transcription factor that acts as a negative regulator of fluconazole resistance in C.albicans. Also confers fluconazole resistance in S.cerevisiae by activation of the PDR5 gene. The protein is Fluconazole resistance protein 1 (FCR1) of Candida albicans (Yeast).